The primary structure comprises 111 residues: Dynein light chain Tctex-type (111 aa).

It belongs to the dynein light chain Tctex-type family. The cytoplasmic dynein complex consists of two catalytic heavy chains (HCs) and a number of non-catalytic subunits presented by intermediate chains (ICs), light intermediate chains (LICs) and light chains (LCs).

The protein resides in the cytoplasm. Its subcellular location is the cytoskeleton. Its function is as follows. Acts as one of several non-catalytic accessory components of the cytoplasmic dynein complex that are thought to be involved in linking dynein to cargos and to adapter proteins that regulate dynein function. Cytoplasmic dynein acts as a motor for the intracellular retrograde motility of vesicles and organelles along microtubules. Required for spermatid differentiation. Is not required for polarized transport in rhabdomere development and appears to be a non-essential component of the cytoplasmic dynein complex. This Drosophila melanogaster (Fruit fly) protein is Dynein light chain Tctex-type (Dlc90F).